The following is a 224-amino-acid chain: LexA repressor (224 aa).

The H-T-H motif DNA-binding region spans 31 to 51; that stretch reads RAEIAAELGFKSANAAEEHLQ. Active-site for autocatalytic cleavage activity residues include serine 142 and lysine 179.

Belongs to the peptidase S24 family. In terms of assembly, homodimer.

It catalyses the reaction Hydrolysis of Ala-|-Gly bond in repressor LexA.. Functionally, represses a number of genes involved in the response to DNA damage (SOS response), including recA and lexA. In the presence of single-stranded DNA, RecA interacts with LexA causing an autocatalytic cleavage which disrupts the DNA-binding part of LexA, leading to derepression of the SOS regulon and eventually DNA repair. The protein is LexA repressor of Acidovorax ebreus (strain TPSY) (Diaphorobacter sp. (strain TPSY)).